We begin with the raw amino-acid sequence, 278 residues long: Coiled-coil domain-containing protein 106 (278 aa).

A coiled-coil region spans residues Ala61 to Arg99. The segment covering Ala102–Gly119 has biased composition (basic and acidic residues). A disordered region spans residues Ala102–Val174. The residue at position 128 (Ser128) is a Phosphoserine. A compositionally biased stretch (low complexity) spans Glu131–Gly144. Positions Lys150–Pro166 are enriched in basic residues. The Bipartite nuclear localization signal motif lies at Arg151–Gly164.

Interacts with p53/TP53.

It localises to the nucleus. Its function is as follows. Promotes the degradation of p53/TP53 protein and inhibits its transactivity. This chain is Coiled-coil domain-containing protein 106 (CCDC106), found in Bos taurus (Bovine).